The primary structure comprises 207 residues: Guanylate kinase (207 aa).

The 181-residue stretch at 4-184 (GILFIISAPS…AVNDLITIIT (181 aa)) folds into the Guanylate kinase-like domain. Position 11–18 (11–18 (APSGTGKS)) interacts with ATP.

Belongs to the guanylate kinase family.

It localises to the cytoplasm. The catalysed reaction is GMP + ATP = GDP + ADP. In terms of biological role, essential for recycling GMP and indirectly, cGMP. This Buchnera aphidicola subsp. Acyrthosiphon pisum (strain APS) (Acyrthosiphon pisum symbiotic bacterium) protein is Guanylate kinase (gmk).